A 154-amino-acid polypeptide reads, in one-letter code: Snaclec dabocetin subunit alpha (154 aa).

The first 23 residues, 1–23 (MGRFISVSFGLLVVFLSLSGTGA), serve as a signal peptide directing secretion. Disulfide bonds link C25-C36, C53-C148, and C123-C140. The C-type lectin domain maps to 32–149 (HEGHCYKVFK…CGDKNPFICK (118 aa)).

It belongs to the snaclec family. In terms of assembly, heterodimer of subunits alpha and beta; disulfide-linked. Expressed by the venom gland.

Its subcellular location is the secreted. In terms of biological role, inhibits ristocetin-induced platelet aggregation via binding to platelet glycoprotein Ibalpha (GP1BA). The polypeptide is Snaclec dabocetin subunit alpha (Daboia siamensis (Eastern Russel's viper)).